The primary structure comprises 273 residues: MKPLVKLFLLFCLVGIVLSRPMPEDEEPVAEGGDDDASGESEGEEETTDDAGGDGGEEENEGEEHAGDKDAGGEDTGKEENTGHDDAGEEDAGEEDAGEEDAGEEDAGEEDAEKEEGEKEDAGDDAGSDDGEEDSTGGDEGEDNAEDSKGSEKNDPADTYRQVVALLDKDTKVDHIQSEYLRSALNNDLQSEVRVPVVEAIGRIGDYSKIQGCFKSMGKDVKKVISEEEKKFKSCMSKKKSEYQCSEDSFAAAKSKLSPITSKIKSCVSSKGR.

An N-terminal signal peptide occupies residues 1 to 19; sequence MKPLVKLFLLFCLVGIVLS. The segment at 20–160 is disordered; that stretch reads RPMPEDEEPV…SEKNDPADTY (141 aa). Acidic residues predominate over residues 24 to 62; that stretch reads EDEEPVAEGGDDDASGESEGEEETTDDAGGDGGEEENEG. Residues 63 to 86 show a composition bias toward basic and acidic residues; that stretch reads EEHAGDKDAGGEDTGKEENTGHDD. Over residues 87–145 the composition is skewed to acidic residues; sequence AGEEDAGEEDAGEEDAGEEDAGEEDAEKEEGEKEDAGDDAGSDDGEEDSTGGDEGEDNA. Positions 137–273 are mediates binding of host collagen; the sequence is GGDEGEDNAE…IKSCVSSKGR (137 aa). A compositionally biased stretch (basic and acidic residues) spans 146–158; that stretch reads EDSKGSEKNDPAD. Disulfide bonds link C213–C267 and C235–C245.

The protein belongs to the aegyptin family. In terms of assembly, monomer; exhibits non-globular elongated shape in solution. As to expression, female saliva (at protein level). Adult female salivary gland (at protein level).

It is found in the secreted. Functionally, modulates blood feeding of female mosquitoes on vertebrate hosts. Inhibits collagen-induced platelet aggregation in the host via preventing collagen interaction with its three major ligands: glycoprotein VI, integrin alpha-2/beta-1 (ITGA2/ITGB1) and von Willebrand factor (VWF). Prevents collagen-mediated thrombus formation in the host. Binds to host collagens but not to laminin, vitronectin (VTN), fibronectin (FN1), von Willebrand factor (VWF) and fibrinogen. Influences cytokine production and populations of circulating leukocytes. In terms of biological role, (Microbial infection) Reduces replication of dengue virus type 2 at inoculation site and viremia levels on day 2 post-inoculation. Promotes production of pro-inflammatory cytokines, such as GM-CSF (CSF2), IFN-gamma (IFNG), IL5 and IL6, in the lymph nodes of mice infected with dengue virus type 2. Increases the number of circulating eosinophils in mice infected with dengue virus type 2. Decreases the number of circulating monocytes in mice infected with dengue virus type 2. The sequence is that of Aegyptin from Aedes aegypti (Yellowfever mosquito).